We begin with the raw amino-acid sequence, 304 residues long: Protein INO2 (304 aa).

The 55-residue stretch at 236–290 (VRKWKHVQMEKIRRINTKEAFERLIKSVRTPPKENGKRIPKHILLTCVMNDIKSI) folds into the bHLH domain.

Efficient DNA binding requires dimerization with another bHLH protein.

Its subcellular location is the nucleus. Positive regulatory factor required for depression of the coregulated phospholipid biosynthetic enzymes. Also involved in the expression of ITR1. This chain is Protein INO2 (INO2), found in Saccharomyces cerevisiae (strain ATCC 204508 / S288c) (Baker's yeast).